Here is a 493-residue protein sequence, read N- to C-terminus: Amphoterin-induced protein 1 (493 aa).

Positions 1-27 (MQPQRDLRGLWLLLLSLFLLLFEVARA) are cleaved as a signal peptide. The LRRNT domain occupies 28–61 (GRPVVSCPANCLCASNILSCSKQQLPNVPQSLPG). Topologically, residues 28–372 (GRPVVSCPAN…LHGHHDTLNT (345 aa)) are extracellular. Cystine bridges form between cysteine 34/cysteine 40 and cysteine 38/cysteine 47. 6 LRR repeats span residues 62 to 83 (YTAL…WTPT), 87 to 108 (NLHS…AFVP), 111 to 132 (NLRY…LFSG), 135 to 156 (ALEV…AFED), 159 to 179 (QLQK…ELIK), and 186 to 206 (KLTL…TDLQ). Asparagine 72 carries an N-linked (GlcNAc...) asparagine glycan. Positions 221-272 (NPLECDCKLYQLFSHWQYRQLSSVMDFQEDLYCVHSKKLHNVFSLDFFNCSE) constitute an LRRCT domain. Intrachain disulfides connect cysteine 225–cysteine 253, cysteine 227–cysteine 270, and cysteine 290–cysteine 341. Asparagine 269, asparagine 315, asparagine 349, and asparagine 360 each carry an N-linked (GlcNAc...) asparagine glycan. In terms of domain architecture, Ig-like C2-type spans 269-353 (NCSEYKESAW…MGETFNETLS (85 aa)). A helical transmembrane segment spans residues 373-393 (AYTTLVGCILSVVLVLIYLYL). At 394 to 493 (TPCRCWCRGV…SVFSDTPIVV (100 aa)) the chain is on the cytoplasmic side. A disordered region spans residues 405-493 (KPSSHQGDSL…SVFSDTPIVV (89 aa)). A compositionally biased stretch (polar residues) spans 408–424 (SHQGDSLSSSMLSTTPN). A compositionally biased stretch (basic and acidic residues) spans 431-442 (GDKDDGFDRRVA). Phosphoserine occurs at positions 477 and 481.

This sequence belongs to the immunoglobulin superfamily. AMIGO family. Homodimer, and heterodimer with AMIGO2 and AMIGO3. Interacts with KCNB1.

It localises to the cell membrane. Its subcellular location is the perikaryon. The protein resides in the cell projection. It is found in the dendrite. The protein localises to the axon. Functionally, promotes growth and fasciculation of neurites from cultured hippocampal neurons. May be involved in fasciculation as well as myelination of developing neural axons. May have a role in regeneration as well as neural plasticity in the adult nervous system. May mediate homophilic as well as heterophilic cell-cell interaction and contribute to signal transduction through its intracellular domain. Assembled with KCNB1 modulates the gating characteristics of the delayed rectifier voltage-dependent potassium channel KCNB1. This is Amphoterin-induced protein 1 from Rattus norvegicus (Rat).